Here is a 670-residue protein sequence, read N- to C-terminus: DNA ligase (670 aa).

NAD(+)-binding positions include 32-36, 81-82, and glutamate 110; these read DAYYD and SL. The active-site N6-AMP-lysine intermediate is lysine 112. NAD(+)-binding residues include arginine 133, glutamate 170, lysine 289, and lysine 313. Residues cysteine 407, cysteine 410, cysteine 425, and cysteine 431 each contribute to the Zn(2+) site. The BRCT domain occupies 590–670; that stretch reads EDELRLKGQT…ELLVFLGLAG (81 aa).

The protein belongs to the NAD-dependent DNA ligase family. LigA subfamily. It depends on Mg(2+) as a cofactor. The cofactor is Mn(2+).

The catalysed reaction is NAD(+) + (deoxyribonucleotide)n-3'-hydroxyl + 5'-phospho-(deoxyribonucleotide)m = (deoxyribonucleotide)n+m + AMP + beta-nicotinamide D-nucleotide.. Its function is as follows. DNA ligase that catalyzes the formation of phosphodiester linkages between 5'-phosphoryl and 3'-hydroxyl groups in double-stranded DNA using NAD as a coenzyme and as the energy source for the reaction. It is essential for DNA replication and repair of damaged DNA. This chain is DNA ligase, found in Shewanella denitrificans (strain OS217 / ATCC BAA-1090 / DSM 15013).